The sequence spans 538 residues: MAAEQDPEARAAARPLLTDLYQATMALGYWRAGRARDAAEFELFFRRCPFGGAFALAAGLRDCVRFLRAFRLRDADVQFLASVLPPDTDPAFFEHLRALDCSEVTVRALPEGSLAFPGVPLLQVSGPLLVVQLLETPLLCLVSYASLVATNAARLRLIAGPEKRLLEMGLRRAQGPDGGLTASTYSYLGGFDSSSNVLAGQLRGVPVAGTLAHSFVTSFSGSEVPPDPMLAPAAGEGPGVDLAAKAQVWLEQVCAHLGLGVQEPHPGERAAFVAYALAFPRAFQGLLDTYSVWRSGLPNFLAVALALGELGYRAVGVRLDSGDLLQQAQEIRKVFRAAAAQFQVPWLESVLIVVSNNIDEEALARLAQEGSEVNVIGIGTSVVTCPQQPSLGGVYKLVAVGGQPRMKLTEDPEKQTLPGSKAAFRLLGSDGSPLMDMLQLAEEPVPQAGQELRVWPPGAQEPCTVRPAQVEPLLRLCLQQGQLCEPLPSLAESRALAQLSLSRLSPEHRRLRSPAQYQVVLSERLQALVNSLCAGQSP.

Residues tyrosine 21 and threonine 210 each contribute to the nicotinate site. A Phosphohistidine modification is found at histidine 213. Arginine 318 provides a ligand contact to nicotinate. A 5-phospho-alpha-D-ribose 1-diphosphate-binding site is contributed by threonine 380. Serine 537 bears the Phosphoserine mark.

The protein belongs to the NAPRTase family. Homodimer. Requires Mg(2+) as cofactor. Mn(2+) serves as cofactor. Post-translationally, transiently phosphorylated on a His residue during the reaction cycle. Phosphorylation strongly increases the affinity for substrates and increases the rate of nicotinate D-ribonucleotide production. Dephosphorylation regenerates the low-affinity form of the enzyme, leading to product release.

The protein resides in the cytoplasm. The protein localises to the cytosol. It catalyses the reaction nicotinate + 5-phospho-alpha-D-ribose 1-diphosphate + ATP + H2O = nicotinate beta-D-ribonucleotide + ADP + phosphate + diphosphate. It functions in the pathway cofactor biosynthesis; NAD(+) biosynthesis; nicotinate D-ribonucleotide from nicotinate: step 1/1. In terms of biological role, catalyzes the first step in the biosynthesis of NAD from nicotinic acid, the ATP-dependent synthesis of beta-nicotinate D-ribonucleotide from nicotinate and 5-phospho-D-ribose 1-phosphate. Helps prevent cellular oxidative stress via its role in NAD biosynthesis. The protein is Nicotinate phosphoribosyltransferase (NAPRT) of Homo sapiens (Human).